We begin with the raw amino-acid sequence, 520 residues long: DNA mismatch repair protein MutL (520 aa).

This sequence belongs to the DNA mismatch repair MutL/HexB family.

In terms of biological role, this protein is involved in the repair of mismatches in DNA. It is required for dam-dependent methyl-directed DNA mismatch repair. May act as a 'molecular matchmaker', a protein that promotes the formation of a stable complex between two or more DNA-binding proteins in an ATP-dependent manner without itself being part of a final effector complex. This Persephonella marina (strain DSM 14350 / EX-H1) protein is DNA mismatch repair protein MutL.